Consider the following 845-residue polypeptide: Tyrosine-protein phosphatase corkscrew (845 aa).

2 SH2 domains span residues 6–101 (WFHP…KQPL) and 111–205 (WFHG…RQPF). A Tyrosine-protein phosphatase domain is found at 227 to 645 (FWEEFESLQQ…KFVYYAVQHY (419 aa)). A PTPase insert (Cys/Ser-rich) region spans residues 289–444 (IRLPTDGDLY…REREREMFKT (156 aa)). Residues 362–402 (SKHKRSESSASSSPSSGSGSGPGSSGTSGVSSVNGPGTPTN) are disordered. Composition is skewed to low complexity over residues 369–378 (SSASSSPSSG) and 388–400 (TSGV…PGTP). S419 carries the phosphoserine modification. Substrate contacts are provided by residues D545, 583 to 589 (CSAGIGR), and Q630. The Phosphocysteine intermediate role is filled by C583. The disordered stretch occupies residues 793–824 (DSLKQQQQREEQAPAGAGKMQQPAPPLRPRPG).

Belongs to the protein-tyrosine phosphatase family. Non-receptor class subfamily. In terms of assembly, interacts with drpr isoform A. As to expression, expressed uniformly throughout all tissues during embryogenesis.

The protein resides in the cytoplasm. The enzyme catalyses O-phospho-L-tyrosyl-[protein] + H2O = L-tyrosyl-[protein] + phosphate. Functionally, required in all receptor tyrosine kinase signaling pathways. Functions downstream of the receptor tyrosine kinase torso, acting in concert with D-Raf via tailless. Also functions downstream of Egfr (epidermal growth factor receptor) and btl (fibroblast growth factor receptor). The SH2 domain suggests that csw effects its role by mediating heteromeric protein interactions. Maternally required for normal determination of cell fates at the termini of the embryo. Required for cell fate specification of the ventral ectoderm, in the developing embryonic CNS and for embryonic tracheal cell migration. Functions during imaginal development for proper formation of adult structures such as eyes, aristae, L5 wing vein and the tarsal claw. Dephosphorylates drpr isoform A which is required for the inhibition by drpr isoform A of glial cell engulfment of axonal debris produced following axonal injury. The sequence is that of Tyrosine-protein phosphatase corkscrew (csw) from Drosophila melanogaster (Fruit fly).